The following is a 238-amino-acid chain: Ribonuclease PH (238 aa).

Residues arginine 86 and 124-126 contribute to the phosphate site; that span reads GTR.

The protein belongs to the RNase PH family. As to quaternary structure, homohexameric ring arranged as a trimer of dimers.

It carries out the reaction tRNA(n+1) + phosphate = tRNA(n) + a ribonucleoside 5'-diphosphate. In terms of biological role, phosphorolytic 3'-5' exoribonuclease that plays an important role in tRNA 3'-end maturation. Removes nucleotide residues following the 3'-CCA terminus of tRNAs; can also add nucleotides to the ends of RNA molecules by using nucleoside diphosphates as substrates, but this may not be physiologically important. Probably plays a role in initiation of 16S rRNA degradation (leading to ribosome degradation) during starvation. The chain is Ribonuclease PH from Pasteurella multocida (strain Pm70).